The following is a 247-amino-acid chain: Large ribosomal subunit protein uL30z (247 aa).

Belongs to the universal ribosomal protein uL30 family.

The chain is Large ribosomal subunit protein uL30z (RPL7A) from Arabidopsis thaliana (Mouse-ear cress).